A 534-amino-acid polypeptide reads, in one-letter code: NAD(P)H-quinone oxidoreductase chain 4 (534 aa).

14 consecutive transmembrane segments (helical) span residues 12-32 (FPWL…IPFF), 44-64 (FALS…INGF), 96-116 (MPLI…AWPV), 120-140 (PKLF…VFAV), 144-164 (LLFF…LAIW), 176-196 (FIIY…AMGF), 220-240 (ILCY…VPLH), 251-271 (TAPV…YALL), 285-305 (FAPL…LTSF), 314-334 (IAYS…SFSS), 340-360 (AMLQ…LVGA), 384-404 (FALW…SGFV), 425-445 (VVMA…LLSM), and 472-492 (VYII…PRLV).

This sequence belongs to the complex I subunit 4 family.

The protein resides in the cellular thylakoid membrane. The enzyme catalyses a plastoquinone + NADH + (n+1) H(+)(in) = a plastoquinol + NAD(+) + n H(+)(out). It carries out the reaction a plastoquinone + NADPH + (n+1) H(+)(in) = a plastoquinol + NADP(+) + n H(+)(out). In terms of biological role, NDH-1 shuttles electrons from NAD(P)H, via FMN and iron-sulfur (Fe-S) centers, to quinones in the respiratory chain. The immediate electron acceptor for the enzyme in this species is believed to be plastoquinone. Couples the redox reaction to proton translocation (for every two electrons transferred, four hydrogen ions are translocated across the cytoplasmic membrane), and thus conserves the redox energy in a proton gradient. The chain is NAD(P)H-quinone oxidoreductase chain 4 from Prochlorococcus marinus (strain MIT 9215).